A 167-amino-acid polypeptide reads, in one-letter code: MASDGEDISVTPAESVTSATDTEEEDIDSPLMQSELHSDEEQPDVEEVPLTTEESEMDELIKQLEDYSPTIPDALTMHILKTAGFCTVDPKIVRLVSVSAQKFISDIANDALQHCKTRTTNIQHSSGHSSSKDKKNPKDRKYTLAMEDLVPALADHGITMRKPQYFV.

Disordered stretches follow at residues 1–56 (MASD…EESE) and 119–139 (TTNI…NPKD). Positions 41 to 56 (EQPDVEEVPLTTEESE) are enriched in acidic residues. Over residues 130 to 139 (SSKDKKNPKD) the composition is skewed to basic and acidic residues.

It belongs to the TAF10 family. In terms of assembly, belongs to the TFIID complex which is composed of TATA binding protein (Tbp) and a number of TBP-associated factors (TAFs). Also a member of the histone acetylase (HAT) complex. At embryonic stage 9, highest expression is detected within the ectoderm, ventral chord, and anterior foregut primordium. Later in development preferential expression is in the foregut, proventriculus, and central nervous system. Coexpressed with Taf10b in the lateral epidermis and anal plate.

The protein resides in the cytoplasm. Its subcellular location is the nucleus. Its function is as follows. TFIID is a multimeric protein complex that plays a central role in mediating promoter responses to various activators and repressors. This Drosophila melanogaster (Fruit fly) protein is Transcription initiation factor TFIID subunit 10.